The following is a 492-amino-acid chain: ATP synthase subunit beta, chloroplastic (492 aa).

ATP is bound at residue 170 to 177 (GGAGVGKT).

The protein belongs to the ATPase alpha/beta chains family. F-type ATPases have 2 components, CF(1) - the catalytic core - and CF(0) - the membrane proton channel. CF(1) has five subunits: alpha(3), beta(3), gamma(1), delta(1), epsilon(1). CF(0) has four main subunits: a(1), b(1), b'(1) and c(9-12).

It localises to the plastid. It is found in the chloroplast thylakoid membrane. The catalysed reaction is ATP + H2O + 4 H(+)(in) = ADP + phosphate + 5 H(+)(out). Its function is as follows. Produces ATP from ADP in the presence of a proton gradient across the membrane. The catalytic sites are hosted primarily by the beta subunits. In Anthoceros angustus (Hornwort), this protein is ATP synthase subunit beta, chloroplastic.